Reading from the N-terminus, the 214-residue chain is Adenylate kinase (214 aa).

10 to 15 (GVGKGT) contributes to the ATP binding site. The tract at residues 30–59 (STGDILRAAVKELTPMGAKAKGYMDSGALV) is NMP. AMP is bound by residues Thr-31, Arg-36, 57–59 (ALV), 85–88 (GFPR), and Gln-92. The interval 126-163 (GRRACANCGAGYHVDFAPSKVAGVCDACSGQLVQREDD) is LID. Arg-127 lines the ATP pocket. Cys-130, Cys-133, Cys-150, and Cys-153 together coordinate Zn(2+). 2 residues coordinate AMP: Arg-160 and Arg-171. Residue Gly-199 coordinates ATP.

It belongs to the adenylate kinase family. Monomer.

It is found in the cytoplasm. The catalysed reaction is AMP + ATP = 2 ADP. The protein operates within purine metabolism; AMP biosynthesis via salvage pathway; AMP from ADP: step 1/1. Its function is as follows. Catalyzes the reversible transfer of the terminal phosphate group between ATP and AMP. Plays an important role in cellular energy homeostasis and in adenine nucleotide metabolism. This is Adenylate kinase from Citrifermentans bemidjiense (strain ATCC BAA-1014 / DSM 16622 / JCM 12645 / Bem) (Geobacter bemidjiensis).